Here is a 292-residue protein sequence, read N- to C-terminus: Aquaporin PIP1-3/PIP1-4 (292 aa).

Positions 1–42 (MEGKEEDVRLGANKFSERQPIGTAAQGAGAGDDDKDYKEPPP) are disordered. 2 helical membrane-spanning segments follow: residues 61–81 (IAEF…VMGV) and 96–118 (IAWS…SGGH). An NPA 1 motif is present at residues 120-122 (NPA). Helical transmembrane passes span 139–159 (IFYI…VKGF), 181–201 (GDGL…VFSA), and 215–235 (ILAP…TIPI). Residues 241–243 (NPA) carry the NPA 2 motif. The helical transmembrane segment at 263–283 (IFWVGPFIGAALAAIYHQVII) threads the bilayer.

Belongs to the MIP/aquaporin (TC 1.A.8) family. PIP (TC 1.A.8.11) subfamily.

It is found in the cell membrane. Its function is as follows. Aquaporins facilitate the transport of water and small neutral solutes across cell membranes. The chain is Aquaporin PIP1-3/PIP1-4 (PIP1-3) from Zea mays (Maize).